A 298-amino-acid polypeptide reads, in one-letter code: MKIGIIGGGSVGLLCAYYLSLYHDVTVVTRRQEQAAAIQSEGIRLYKGGEEFRADCSADTSINSDFDLLVVTVKQHQLQSVFSSLERIGKTNILFLQNGMGHIHDLKDWHVGHSIYVGIVEHGAVRKSDTAVDHTGLGAIKWSAFDDAEPDRLNILFQHNHSDFPIYYETDWYRLLTGKLIVNACINPLTALLQVKNGELLTTPAYLAFMKLVFQEACRILKLENEEKAWERVQAVCGQTKENRSSMLVDVIGGRQTEADAIIGYLLKEASLQGLDAVHLEFLYGSIKALERNTNKVF.

NADP(+) is bound by residues 7–12, Asn98, and Ala124; that span reads GGGSVG. Asn98 is a substrate binding site. Residue Lys179 is the Proton donor of the active site. 4 residues coordinate substrate: Asn183, Asn187, Asn197, and Ser246. Residue Glu258 participates in NADP(+) binding.

It belongs to the ketopantoate reductase family.

The protein localises to the cytoplasm. The catalysed reaction is (R)-pantoate + NADP(+) = 2-dehydropantoate + NADPH + H(+). Its pathway is cofactor biosynthesis; (R)-pantothenate biosynthesis; (R)-pantoate from 3-methyl-2-oxobutanoate: step 2/2. In terms of biological role, catalyzes the NADPH-dependent reduction of ketopantoate into pantoic acid. In Bacillus subtilis (strain 168), this protein is 2-dehydropantoate 2-reductase (panE).